The sequence spans 114 residues: Anti-adapter protein IraM (114 aa).

Belongs to the IraM/RssC family.

Its subcellular location is the cytoplasm. Functionally, involved in the stabilization of the sigma stress factor RpoS. This Citrobacter koseri (strain ATCC BAA-895 / CDC 4225-83 / SGSC4696) protein is Anti-adapter protein IraM.